Consider the following 563-residue polypeptide: CDKN2A-interacting protein (563 aa).

Position 2 is an N-acetylalanine (Ala2). The region spanning 19–126 is the XRN2-binding (XTBD) domain; it reads VETLRCEGET…KVKKRGISSS (108 aa). Disordered stretches follow at residues 122–289 and 304–351; these read GISS…LLGS and SSSE…PSLL. At Ser124 the chain carries Phosphoserine. The span at 147–160 shows a compositional bias: basic and acidic residues; that stretch reads VERDHGKKSAKTDR. Low complexity-rich tracts occupy residues 168 to 216 and 234 to 248; these read SSPS…SSQV and SASFVSSLLKSSMNS. Lys177 is covalently cross-linked (Glycyl lysine isopeptide (Lys-Gly) (interchain with G-Cter in SUMO1)). Ser234 is modified (phosphoserine). Polar residues predominate over residues 249–262; sequence HMTQSTDNRQQSGS. The span at 270-280 shows a compositional bias: low complexity; the sequence is GSSGSASQSSS. A Phosphothreonine modification is found at Thr340. The residue at position 371 (Ser371) is a Phosphoserine. The 76-residue stretch at 445 to 520 folds into the DRBM domain; that stretch reads NHGELLNAAI…SREALKLFLK (76 aa).

This sequence belongs to the CARF family. Interacts with CDKN2A/p14ARF, p53/TP53 and MDM2. Interacts with CHEK2 and MAPK3. Interacts with XRN2. In terms of processing, may be ubiquitinated.

It is found in the nucleus. Its subcellular location is the nucleoplasm. In terms of biological role, regulates DNA damage response and cell proliferation in a dose-dependent manner through a number of signaling pathways involved in cell proliferation, apoptosis and senescence. In Mus musculus (Mouse), this protein is CDKN2A-interacting protein (Cdkn2aip).